The chain runs to 245 residues: Probable phosphatase PC1_1798 (245 aa).

Zn(2+) contacts are provided by histidine 7, histidine 9, histidine 15, histidine 40, glutamate 73, histidine 101, histidine 131, aspartate 192, and histidine 194.

It belongs to the PHP family. Homotrimer. Zn(2+) serves as cofactor.

This chain is Probable phosphatase PC1_1798, found in Pectobacterium carotovorum subsp. carotovorum (strain PC1).